The sequence spans 410 residues: Protein disulfide isomerase CRELD1 (410 aa).

Residues 1-29 (MGMSRRMFLTVYGSLWLLLLLSRPGVSKP) form the signal peptide. Residues 30-352 (QLCQTCQNLV…GLFDDITDDE (323 aa)) lie on the Extracellular side of the membrane. The CXXC motif lies at 32 to 35 (CQTC). 4 disulfide bridges follow: cysteine 32-cysteine 35, cysteine 141-cysteine 155, cysteine 149-cysteine 167, and cysteine 169-cysteine 178. Residues 139-179 (LSCPGGTEKPCSGNGQCNGDGTRFGTGVCDCYTSYGGPVCM) form the EGF-like 1 domain. FU repeat units lie at residues 194-243 (HLVC…DHCK) and 254-301 (SYEC…ELPK). A CXXC motif is present at residues 264–267 (CIGC). 4 disulfide bridges follow: cysteine 264-cysteine 267, cysteine 295-cysteine 309, cysteine 302-cysteine 318, and cysteine 320-cysteine 331. One can recognise an EGF-like 2; calcium-binding domain in the interval 291 to 332 (DVDECDSELPKCKGSHEECVNTEGSFTCVCEKDYSRIDGMCR). The chain crosses the membrane as a helical span at residues 353-373 (VVVLQQMFFGVVICALATLAA). A topological domain (cytoplasmic) is located at residue lysine 374. The chain crosses the membrane as a helical span at residues 375–395 (GDMVFTAIFIGAVAAMAGYWL). Over 396 to 410 (SEKGDRALDSFMKGR) the chain is Extracellular.

This sequence belongs to the CRELD family.

The protein localises to the membrane. It carries out the reaction Catalyzes the rearrangement of -S-S- bonds in proteins.. In terms of biological role, protein disulfide isomerase. Promotes the localization of acetylcholine receptors (AChRs) to the plasma membrane. The chain is Protein disulfide isomerase CRELD1 (creld1) from Xenopus tropicalis (Western clawed frog).